The chain runs to 228 residues: Triosephosphate isomerase (228 aa).

9–11 (NFK) is a substrate binding site. Residue H93 is the Electrophile of the active site. Catalysis depends on E141, which acts as the Proton acceptor. Substrate is bound by residues I146, G180, and 201 to 202 (AS).

It belongs to the triosephosphate isomerase family. Homotetramer; dimer of dimers.

Its subcellular location is the cytoplasm. The catalysed reaction is D-glyceraldehyde 3-phosphate = dihydroxyacetone phosphate. Its pathway is carbohydrate biosynthesis; gluconeogenesis. The protein operates within carbohydrate degradation; glycolysis; D-glyceraldehyde 3-phosphate from glycerone phosphate: step 1/1. Functionally, involved in the gluconeogenesis. Catalyzes stereospecifically the conversion of dihydroxyacetone phosphate (DHAP) to D-glyceraldehyde-3-phosphate (G3P). The sequence is that of Triosephosphate isomerase from Metallosphaera sedula (strain ATCC 51363 / DSM 5348 / JCM 9185 / NBRC 15509 / TH2).